A 338-amino-acid polypeptide reads, in one-letter code: Ketol-acid reductoisomerase (NADP(+)) (338 aa).

The region spanning 1–181 (MNVFYDKDAD…GGGRAGIIET (181 aa)) is the KARI N-terminal Rossmann domain. NADP(+) contacts are provided by residues 24 to 27 (YGSQ), Arg-47, and Ser-52. The active site involves His-107. Position 133 (Gly-133) interacts with NADP(+). A KARI C-terminal knotted domain is found at 182 to 327 (NFREETETDL…AKLRAMMPWI (146 aa)). Mg(2+)-binding residues include Asp-190, Glu-194, Glu-226, and Glu-230. Ser-251 serves as a coordination point for substrate.

This sequence belongs to the ketol-acid reductoisomerase family. Requires Mg(2+) as cofactor.

It catalyses the reaction (2R)-2,3-dihydroxy-3-methylbutanoate + NADP(+) = (2S)-2-acetolactate + NADPH + H(+). The catalysed reaction is (2R,3R)-2,3-dihydroxy-3-methylpentanoate + NADP(+) = (S)-2-ethyl-2-hydroxy-3-oxobutanoate + NADPH + H(+). The protein operates within amino-acid biosynthesis; L-isoleucine biosynthesis; L-isoleucine from 2-oxobutanoate: step 2/4. It functions in the pathway amino-acid biosynthesis; L-valine biosynthesis; L-valine from pyruvate: step 2/4. Its function is as follows. Involved in the biosynthesis of branched-chain amino acids (BCAA). Catalyzes an alkyl-migration followed by a ketol-acid reduction of (S)-2-acetolactate (S2AL) to yield (R)-2,3-dihydroxy-isovalerate. In the isomerase reaction, S2AL is rearranged via a Mg-dependent methyl migration to produce 3-hydroxy-3-methyl-2-ketobutyrate (HMKB). In the reductase reaction, this 2-ketoacid undergoes a metal-dependent reduction by NADPH to yield (R)-2,3-dihydroxy-isovalerate. In Burkholderia cenocepacia (strain HI2424), this protein is Ketol-acid reductoisomerase (NADP(+)).